Reading from the N-terminus, the 685-residue chain is MESTTAFSAVTSALGTLDVHIMAPYLWMLVLGFVIAFVLAFSVGANDVANSFGTAVGSGVVTLRQACILASIFETVGSVLLGAKVSETIRKGLIDVTMYNSTQELLMAGSISAMFGSAVWQLAASFMKLPISGTHCIVGATIGFSLVAKGQQGVKWIELLRIVLSWFISPLLSGIMSALLFLFVRMFILRKADPVPNGLRALPVFYACTIGINLFSIMFTGAPLLGFDKVPLWGIILISVGCAVLCALIVWFVVCPRMKRKIECEFKSSPSESPLMDKKNQELRCPILKPDPEDLKLPVDGGIVAEVKVPILDMVSVSRTEERTVTFKMGECDDPIEKEKLNSMETNIDQPTNGSVQLPNGNHVQFSQAVSNQMNSSGQYQYHTVHKDSGLYKDLLHKLHLAKMGDCMGDSGDKPLRRNNSYTSYTMAICGMPLDSLRNRDTEARPDEAEKSTVHGADGKKRIRMDSYTSYCNAVADTHMDVEAEEQEEGSVEDVETDRKSSSSSLEERHDQDKPEVSLLFQFLQILTACFGSFAHGGNDVSNAIGPLVALYLVYETGDVTTKAATPIWLLLYGGIGICIGLWVWGRRVIQTMGKDLTPITPSSGFSIELASALTVVIASNVGLPISTTHCKVGSVVSVGWLRSKKAVDWRLFRNIFLAWFVTVPISGLISAGIMALFKYAILKV.

A run of 6 helical transmembrane segments spans residues 21–41 (IMAPYLWMLVLGFVIAFVLAF), 66–86 (ACILASIFETVGSVLLGAKVS), 106–126 (LMAGSISAMFGSAVWQLAASF), 162–182 (IVLSWFISPLLSGIMSALLFL), 207–227 (ACTIGINLFSIMFTGAPLLGF), and 234–254 (GIILISVGCAVLCALIVWFVV). 2 disordered regions span residues 438–458 (RNRDTEARPDEAEKSTVHGAD) and 483–513 (EAEEQEEGSVEDVETDRKSSSSSLEERHDQD). The span at 483 to 496 (EAEEQEEGSVEDVE) shows a compositional bias: acidic residues. Over residues 497 to 513 (TDRKSSSSSLEERHDQD) the composition is skewed to basic and acidic residues. 4 consecutive transmembrane segments (helical) span residues 517-537 (VSLLFQFLQILTACFGSFAHG), 565-585 (ATPIWLLLYGGIGICIGLWVW), 606-626 (FSIELASALTVVIASNVGLPI), and 656-676 (IFLAWFVTVPISGLISAGIMA).

The protein belongs to the inorganic phosphate transporter (PiT) (TC 2.A.20) family.

The protein resides in the membrane. Functionally, sodium-phosphate symporter which plays a fundamental housekeeping role in phosphate transport. The sequence is that of Sodium-dependent phosphate transporter 1-A (slc20a1-a) from Xenopus laevis (African clawed frog).